The sequence spans 358 residues: MLKTPLYESHIAANAKMVDFSGWSMPINYGSQIQEHNNVREDCGIFDVSHMLAVDIQGSEAEKFLRYLLANDVAKLQENKAQYGCMLNHDAGIVDDLITYKVTDEHFRIVVNAGNRESDVAWFNQNAQNFDVAITPQTDLAIVAVQGPKAVAVIKRVVTKEIAAEIEALLPFSFKFFSKWMVARTGYTGEDGFEVILPATQVKKFWDSLLENGAQPAGLGARDTLRLEAGMHLYGADMDTSTTPLERGLGWSVDLSDEHRDFIGKKAYLAKKAQGVDTKWVGVVLKTKGVLRAGQEIDFDNGEKGYITSGSFSPTLKVAIGLAYVPKQADNPVVNIRGKELEVELVKPKFVKNGKSLI.

Belongs to the GcvT family. As to quaternary structure, the glycine cleavage system is composed of four proteins: P, T, L and H.

It carries out the reaction N(6)-[(R)-S(8)-aminomethyldihydrolipoyl]-L-lysyl-[protein] + (6S)-5,6,7,8-tetrahydrofolate = N(6)-[(R)-dihydrolipoyl]-L-lysyl-[protein] + (6R)-5,10-methylene-5,6,7,8-tetrahydrofolate + NH4(+). Functionally, the glycine cleavage system catalyzes the degradation of glycine. The sequence is that of Aminomethyltransferase from Francisella tularensis subsp. tularensis (strain WY96-3418).